The sequence spans 296 residues: Elongation factor Ts (296 aa).

Residues 81–84 form an involved in Mg(2+) ion dislocation from EF-Tu region; that stretch reads TDFV.

It belongs to the EF-Ts family.

The protein resides in the cytoplasm. Associates with the EF-Tu.GDP complex and induces the exchange of GDP to GTP. It remains bound to the aminoacyl-tRNA.EF-Tu.GTP complex up to the GTP hydrolysis stage on the ribosome. The polypeptide is Elongation factor Ts (Ruthia magnifica subsp. Calyptogena magnifica).